Here is an 86-residue protein sequence, read N- to C-terminus: Large ribosomal subunit protein bL27 (86 aa).

The tract at residues 1–22 is disordered; that stretch reads MATKKAGGSSRNGRDSAGRRLG.

Belongs to the bacterial ribosomal protein bL27 family.

This is Large ribosomal subunit protein bL27 from Rickettsia peacockii (strain Rustic).